A 563-amino-acid polypeptide reads, in one-letter code: Endogenous retroviral envelope protein HEMO (563 aa).

The signal sequence occupies residues 1–26 (MGSLSNYALLQLTLTAFLTILVQPQH). Over 27 to 488 (LLAPVFRTLS…IFAKVGDWFR (462 aa)) the chain is Extracellular. 2 N-linked (GlcNAc...) asparagine glycosylation sites follow: asparagine 122 and asparagine 192. A helical membrane pass occupies residues 489–509 (SWGYVLLIVLFCLFIFVLIYV). Topologically, residues 510-563 (RVFRKSRRSLNSQPLNLALSPQQSAQLLVSETSCQVSNRAMKGLTTHQYDTSLL) are cytoplasmic.

This sequence belongs to the gamma type-C retroviral envelope protein family. N-glycosylated. Post-translationally, cleaved by some metalloproteinase at 432-Gln-Arg-433 (mainly) or 433-Arg-Gln-434, leading to release the secreted form (Endogenous retroviral envelope protein HEMO, secreted form) in the extracellular medium. As to expression, expressed at high level in the placenta and stem cells (at protein level). Also expressed in the kidney but at a lower level. Endogenous retroviral envelope protein HEMO, secreted form: Present in the blood of pregnant women (at protein level).

It is found in the cell membrane. The protein localises to the secreted. Its function is as follows. Endogenous envelope proteins originate from retroviral envelope proteins, which mediate receptor recognition and membrane fusion during early infection. Endogenous envelope proteins may have kept, lost or modified their original function during evolution. The polypeptide is Endogenous retroviral envelope protein HEMO (Homo sapiens (Human)).